The following is a 308-amino-acid chain: Ribonuclease Z (308 aa).

Residues His63, His65, Asp67, His68, His141, Asp212, and His270 each coordinate Zn(2+). Catalysis depends on Asp67, which acts as the Proton acceptor.

The protein belongs to the RNase Z family. In terms of assembly, homodimer. Zn(2+) is required as a cofactor.

It carries out the reaction Endonucleolytic cleavage of RNA, removing extra 3' nucleotides from tRNA precursor, generating 3' termini of tRNAs. A 3'-hydroxy group is left at the tRNA terminus and a 5'-phosphoryl group is left at the trailer molecule.. In terms of biological role, zinc phosphodiesterase, which displays some tRNA 3'-processing endonuclease activity. Probably involved in tRNA maturation, by removing a 3'-trailer from precursor tRNA. In Pediococcus pentosaceus (strain ATCC 25745 / CCUG 21536 / LMG 10740 / 183-1w), this protein is Ribonuclease Z.